Consider the following 467-residue polypeptide: Indoleacetamide hydrolase (467 aa).

Catalysis depends on charge relay system residues Lys-74 and Ser-149. The active-site Acyl-ester intermediate is the Ser-173.

The protein belongs to the amidase family.

It participates in plant hormone metabolism; auxin biosynthesis. In terms of biological role, hydrolyzes indole-3-acetamide (IAM) into indole-3-acetic acid (IAA). This Rhizobium radiobacter (Agrobacterium tumefaciens) protein is Indoleacetamide hydrolase (tms2).